The sequence spans 161 residues: Ribosome maturation factor RimP (161 aa).

This sequence belongs to the RimP family.

The protein resides in the cytoplasm. Functionally, required for maturation of 30S ribosomal subunits. The chain is Ribosome maturation factor RimP from Myxococcus xanthus (strain DK1622).